A 143-amino-acid chain; its full sequence is uncharacterized protein (143 aa).

Residues 65–85 form a helical membrane-spanning segment; it reads LVWMLVGTIVLSLDIIFPALV.

The protein resides in the membrane. This is an uncharacterized protein from Saccharomyces cerevisiae (strain ATCC 204508 / S288c) (Baker's yeast).